A 142-amino-acid chain; its full sequence is Galectin-16 (142 aa).

Positions V6 to N138 constitute a Galectin domain.

As to expression, predominantly and highly expressed in the placenta where it is localized mainly in the syncytiotrophoblast and in the endothelia of fetal vessels. Also detected in the amnion and chorionic trophoblasts in fetal membranes.

Its function is as follows. Binds lactose with high affinity. Strong inducer of T-cell apoptosis. The sequence is that of Galectin-16 from Homo sapiens (Human).